The following is a 306-amino-acid chain: Agmatinase (306 aa).

Mn(2+)-binding residues include histidine 126, aspartate 149, histidine 151, aspartate 153, aspartate 230, and aspartate 232.

It belongs to the arginase family. Agmatinase subfamily. Requires Mn(2+) as cofactor.

It catalyses the reaction agmatine + H2O = urea + putrescine. It functions in the pathway amine and polyamine biosynthesis; putrescine biosynthesis via agmatine pathway; putrescine from agmatine: step 1/1. Its function is as follows. Catalyzes the formation of putrescine from agmatine. This Serratia proteamaculans (strain 568) protein is Agmatinase.